The chain runs to 281 residues: Hydroxyethylthiazole kinase (281 aa).

ATP-binding residues include arginine 124 and serine 169.

It belongs to the Thz kinase family. Mg(2+) serves as cofactor.

It catalyses the reaction 5-(2-hydroxyethyl)-4-methylthiazole + ATP = 4-methyl-5-(2-phosphooxyethyl)-thiazole + ADP + H(+). The protein operates within cofactor biosynthesis; thiamine diphosphate biosynthesis; 4-methyl-5-(2-phosphoethyl)-thiazole from 5-(2-hydroxyethyl)-4-methylthiazole: step 1/1. Functionally, catalyzes the phosphorylation of the hydroxyl group of 4-methyl-5-beta-hydroxyethylthiazole (THZ). The polypeptide is Hydroxyethylthiazole kinase (Rhodococcus erythropolis (strain PR4 / NBRC 100887)).